Consider the following 269-residue polypeptide: tRNA pseudouridine synthase A (269 aa).

Aspartate 55 acts as the Nucleophile in catalysis. A substrate-binding site is contributed by tyrosine 111.

It belongs to the tRNA pseudouridine synthase TruA family.

The enzyme catalyses uridine(38/39/40) in tRNA = pseudouridine(38/39/40) in tRNA. Its function is as follows. Formation of pseudouridine at positions 38, 39 and 40 in the anticodon stem and loop of transfer RNAs. The sequence is that of tRNA pseudouridine synthase A from Methanosarcina barkeri (strain Fusaro / DSM 804).